The following is a 214-amino-acid chain: Probable DNA (cytosine-5)-methyltransferase (214 aa).

Cys-62 is an active-site residue.

The protein belongs to the class I-like SAM-binding methyltransferase superfamily. C5-methyltransferase family. As to quaternary structure, probably requires another subunit for function.

The catalysed reaction is a 2'-deoxycytidine in DNA + S-adenosyl-L-methionine = a 5-methyl-2'-deoxycytidine in DNA + S-adenosyl-L-homocysteine + H(+). Its function is as follows. This is probably the methylase that recognizes and modifies 5'-CpG-3'. This chain is Probable DNA (cytosine-5)-methyltransferase, found in Dryophytes versicolor (chameleon treefrog).